A 230-amino-acid chain; its full sequence is Broad-specificity phosphatase YOR283W (230 aa).

His24 (tele-phosphohistidine intermediate) is an active-site residue. Substrate contacts are provided by residues 36-37 (QG) and 102-105 (ERYM). Residue Glu102 is the Proton donor/acceptor of the active site.

Belongs to the phosphoglycerate mutase family. BPG-dependent PGAM subfamily.

The protein localises to the cytoplasm. Its subcellular location is the nucleus. In terms of biological role, metal-independent phosphatase active against a broad range of phosphorylated substrates including nucleoside tri- and diphosphates, phosphorylated organic acids, and amino acids. Shows no activity against phytic acid, phosphorylated carbohydrates, and nucleoside monophosphates. This Saccharomyces cerevisiae (strain ATCC 204508 / S288c) (Baker's yeast) protein is Broad-specificity phosphatase YOR283W.